A 146-amino-acid polypeptide reads, in one-letter code: Catabolic 3-dehydroquinase (146 aa).

Y24 serves as the catalytic Proton acceptor. Substrate is bound by residues N78, H84, and D91. The active-site Proton donor is the H104. Residues 105–106 and R115 contribute to the substrate site; that span reads IT.

This sequence belongs to the type-II 3-dehydroquinase family. In terms of assembly, homododecamer. Adopts a ring-like structure, composed of an arrangement of two hexameric rings stacked on top of one another.

It carries out the reaction 3-dehydroquinate = 3-dehydroshikimate + H2O. Its pathway is aromatic compound metabolism; 3,4-dihydroxybenzoate biosynthesis; 3,4-dihydroxybenzoate from 3-dehydroquinate: step 1/2. Functionally, is involved in the catabolism of quinate. Allows the utilization of quinate as carbon source via the beta-ketoadipate pathway. This chain is Catabolic 3-dehydroquinase, found in Scheffersomyces stipitis (strain ATCC 58785 / CBS 6054 / NBRC 10063 / NRRL Y-11545) (Yeast).